The chain runs to 1671 residues: DNA polymerase (1671 aa).

Positions 135–326 are 3'-5' exonuclease; the sequence is LKMLAFDIET…KVTYELGKEF (192 aa). Residues 524–665 form the DOD-type homing endonuclease 1 domain; sequence LAGILLAEGT…VSKLLSQLGI (142 aa). The cysteines at positions 788 and 802 are disulfide-linked. The DOD-type homing endonuclease 2 domain occupies 1132–1265; sequence LLGYYVSEGY…LVLLLNSVGV (134 aa). A disulfide bridge connects residues cysteine 1403 and cysteine 1406.

Belongs to the DNA polymerase type-B family. Undergoes a protein self splicing that involves a post-translational excision of the intervening region (intein) followed by peptide ligation.

It carries out the reaction DNA(n) + a 2'-deoxyribonucleoside 5'-triphosphate = DNA(n+1) + diphosphate. Its function is as follows. Has high processivity, a high polymerization rate and high fidelity. In addition to polymerase activity, also exhibits 3' to 5' exonuclease activity. In terms of biological role, intein encoded endonucleases are thought to mediate intein mobility by site-specific recombination initiated by endonuclease cleavage at the 'homing site' in genes that lack the intein. Upon expression in E.coli PI-PkoI recognizes the minimal sequence 5'-GATTTTAGATCCCTGTACC-3' and cuts after T-10. PI-PkoII recognizes the minimal sequence 5'-CAGCTACTACGGTTAC-3' and cuts after C-10. Given the high intracellular K(+) content (&gt;0.5 M), PI-PkoII is probably more active than PI-PkoI in vivo. In Thermococcus kodakarensis (strain ATCC BAA-918 / JCM 12380 / KOD1) (Pyrococcus kodakaraensis (strain KOD1)), this protein is DNA polymerase (pol).